The primary structure comprises 31 residues: Photosystem II reaction center protein T (31 aa).

The chain crosses the membrane as a helical span at residues 3–23; it reads AIVYTFLLVGTLGIIFFAIFF.

Belongs to the PsbT family. As to quaternary structure, PSII is composed of 1 copy each of membrane proteins PsbA, PsbB, PsbC, PsbD, PsbE, PsbF, PsbH, PsbI, PsbJ, PsbK, PsbL, PsbM, PsbT, PsbY, PsbZ, Psb30/Ycf12, at least 3 peripheral proteins of the oxygen-evolving complex and a large number of cofactors. It forms dimeric complexes.

The protein localises to the plastid. It localises to the chloroplast thylakoid membrane. Found at the monomer-monomer interface of the photosystem II (PS II) dimer, plays a role in assembly and dimerization of PSII. PSII is a light-driven water plastoquinone oxidoreductase, using light energy to abstract electrons from H(2)O, generating a proton gradient subsequently used for ATP formation. This chain is Photosystem II reaction center protein T, found in Ostreococcus tauri.